A 369-amino-acid chain; its full sequence is Glutamate 5-kinase (369 aa).

An ATP-binding site is contributed by lysine 9. Residues serine 49, aspartate 136, and asparagine 148 each coordinate substrate. ATP contacts are provided by residues 168–169 (TD) and 210–216 (TGGMLTK). Residues 275 to 355 (QGEIYVDQGA…KGVVIHRDDW (81 aa)) enclose the PUA domain.

Belongs to the glutamate 5-kinase family.

The protein localises to the cytoplasm. It carries out the reaction L-glutamate + ATP = L-glutamyl 5-phosphate + ADP. It functions in the pathway amino-acid biosynthesis; L-proline biosynthesis; L-glutamate 5-semialdehyde from L-glutamate: step 1/2. Catalyzes the transfer of a phosphate group to glutamate to form L-glutamate 5-phosphate. This chain is Glutamate 5-kinase, found in Streptococcus gordonii (strain Challis / ATCC 35105 / BCRC 15272 / CH1 / DL1 / V288).